The primary structure comprises 178 residues: Large ribosomal subunit protein uL10 (178 aa).

This sequence belongs to the universal ribosomal protein uL10 family. Part of the ribosomal stalk of the 50S ribosomal subunit. The N-terminus interacts with L11 and the large rRNA to form the base of the stalk. The C-terminus forms an elongated spine to which L12 dimers bind in a sequential fashion forming a multimeric L10(L12)X complex.

In terms of biological role, forms part of the ribosomal stalk, playing a central role in the interaction of the ribosome with GTP-bound translation factors. The sequence is that of Large ribosomal subunit protein uL10 from Gloeothece citriformis (strain PCC 7424) (Cyanothece sp. (strain PCC 7424)).